Here is a 201-residue protein sequence, read N- to C-terminus: Orotate phosphoribosyltransferase (201 aa).

5-phospho-alpha-D-ribose 1-diphosphate is bound at residue 113 to 121 (EDIITTGKS). Orotate is bound by residues threonine 117 and arginine 145.

It belongs to the purine/pyrimidine phosphoribosyltransferase family. PyrE subfamily. As to quaternary structure, homodimer. The cofactor is Mg(2+).

The enzyme catalyses orotidine 5'-phosphate + diphosphate = orotate + 5-phospho-alpha-D-ribose 1-diphosphate. It functions in the pathway pyrimidine metabolism; UMP biosynthesis via de novo pathway; UMP from orotate: step 1/2. Its function is as follows. Catalyzes the transfer of a ribosyl phosphate group from 5-phosphoribose 1-diphosphate to orotate, leading to the formation of orotidine monophosphate (OMP). This Helicobacter pylori (strain Shi470) protein is Orotate phosphoribosyltransferase.